The following is an 889-amino-acid chain: Serine/threonine-protein kinase D3 (889 aa).

Phosphoserine occurs at positions 27, 37, 41, and 44. The Phorbol-ester/DAG-type 1 zinc finger occupies 154-204; that stretch reads PHALYVHSYKAPTFCDYCGEMLWGLVRQGLKCEGCGLNYHKRCAFKIPNNC. Phosphoserine occurs at positions 213 and 216. The Phorbol-ester/DAG-type 2 zinc finger occupies 271–321; the sequence is PHTFAVHSYGRPTICQYCKRLLKGLFRQGMQCKDCKFNCHKRCASKVPRDC. The interval 336–370 is disordered; that stretch reads TDADMPMDIDSSDVNSDGSRGLDDSEEPSPPEDKM. A phosphoserine mark is found at serine 346, serine 391, and serine 395. Residues 416–532 enclose the PH domain; that stretch reads TVVKEGWMVH…WEKAIRQALM (117 aa). A Phosphotyrosine modification is found at tyrosine 426. Serine 442 is modified (phosphoserine). The residue at position 457 (tyrosine 457) is a Phosphotyrosine. Residue threonine 535 is modified to Phosphothreonine. Serine 539 carries the post-translational modification Phosphoserine. One can recognise a Protein kinase domain in the interval 575–831; sequence IFADEVLGSG…VDKSLSHPWL (257 aa). Residues 581 to 589 and lysine 604 contribute to the ATP site; that span reads LGSGQFGIV. Aspartate 698 functions as the Proton acceptor in the catalytic mechanism. At serine 730 the chain carries Phosphoserine; by PKC. The residue at position 734 (serine 734) is a Phosphoserine; by autocatalysis. Phosphotyrosine is present on tyrosine 741.

Belongs to the protein kinase superfamily. CAMK Ser/Thr protein kinase family. PKD subfamily. Requires Mg(2+) as cofactor.

It localises to the cytoplasm. The protein resides in the membrane. The enzyme catalyses L-seryl-[protein] + ATP = O-phospho-L-seryl-[protein] + ADP + H(+). It carries out the reaction L-threonyl-[protein] + ATP = O-phospho-L-threonyl-[protein] + ADP + H(+). Its activity is regulated as follows. Activated by DAG and phorbol esters. Phorbol-ester/DAG-type domains 1 and 2 bind both DAG and phorbol ester with high affinity and mediate translocation to the cell membrane. Autophosphorylation of Ser-734 and phosphorylation of Ser-730 by PKC relieves auto-inhibition by the PH domain. Converts transient diacylglycerol (DAG) signals into prolonged physiological effects, downstream of PKC. Involved in resistance to oxidative stress. This chain is Serine/threonine-protein kinase D3 (Prkd3), found in Mus musculus (Mouse).